A 459-amino-acid polypeptide reads, in one-letter code: Anthocyanidin 3-O-glucoside 2''-O-glucosyltransferase (459 aa).

H20 (proton acceptor) is an active-site residue. An an anthocyanidin-binding site is contributed by H20. D117 acts as the Charge relay in catalysis. UDP-alpha-D-glucose is bound by residues T138, V335, Q337, H352, W355, S357, and E360. G375 contacts an anthocyanidin. D376 and Q377 together coordinate UDP-alpha-D-glucose.

It belongs to the UDP-glycosyltransferase family. In terms of tissue distribution, mainly expressed in the petals and tubes of flower buds at around 24 hours before flower opening.

The catalysed reaction is an anthocyanidin 3-O-beta-D-glucoside + UDP-alpha-D-glucose = an anthocyanidin 3-O-sophoroside + UDP + 2 H(+). Its pathway is pigment biosynthesis; anthocyanin biosynthesis. Functionally, glycosyltransferase that mediates the glucosylation of anthocyanidin 3-O-glucosides to yield anthocyanidin 3-O-sophorosides. 3-O-sophoroside derivatives are required for the bright blue or red color of flowers. This is Anthocyanidin 3-O-glucoside 2''-O-glucosyltransferase (3GGT) from Ipomoea nil (Japanese morning glory).